Reading from the N-terminus, the 57-residue chain is U13-myrmicitoxin-Mri1a (57 aa).

The N-terminal stretch at Met1 to Ala23 is a signal peptide. Positions Glu24–Ala29 are excised as a propeptide. A Glutamic acid 1-amide modification is found at Glu56.

Expressed by the venom gland.

Its subcellular location is the secreted. Induces paralysis 1 hour after injection into insects (blowfly L.caesar) but does not appear to be lethal. The sequence is that of U13-myrmicitoxin-Mri1a from Manica rubida (European giant red ant).